A 519-amino-acid polypeptide reads, in one-letter code: Transmembrane protein 180 (519 aa).

Residues 1-11 (MGLDWPQAWLL) are Extracellular-facing. A helical membrane pass occupies residues 12-43 (GLPIAVVYGSLALFTSILHNVFLLYYVDTFVS). Residues 44–55 (VYKINKVSFWVG) are Cytoplasmic-facing. The chain crosses the membrane as a helical span at residues 56–74 (ETVFLLWNSFNDPLFGWLS). The Extracellular portion of the chain corresponds to 75-100 (DRQLLSSQPRSGAGLSSRDVVLTRVR). Residues 101-118 (ALGWHGPLLALSFLAFWV) traverse the membrane as a helical segment. Over 119-126 (PWAPAGLQ) the chain is Cytoplasmic. Residues 127–151 (FLLCLCLYDGFLTLVDLHHHALLAD) form a helical membrane-spanning segment. The Extracellular segment spans residues 152 to 155 (LALS). The chain crosses the membrane as a helical span at residues 156-179 (SHDRTHLNFYCSLFSAAGSLSVFA). At 180–191 (SYAFWNKEDFSS) the chain is on the cytoplasmic side. The chain crosses the membrane as a helical span at residues 192 to 223 (FRAFCVVLAAGSGLGFLGTTQLLKRQIEATRR). Topologically, residues 224–264 (DRGCPGLDLDGGVCEEEPPVGGEEAGNITLGQYLRQLARHQ) are extracellular. N-linked (GlcNAc...) asparagine glycosylation is present at asparagine 250. The chain crosses the membrane as a helical span at residues 265–292 (NFLWFVGMDLVQVFHCHFNSNFFPLFLE). Residues 293–305 (HLLSDHISLSTGS) lie on the Cytoplasmic side of the membrane. The chain crosses the membrane as a helical span at residues 306-325 (FLLGISYVAPHLNNLYFLPL). Residues 326-330 (CRRWG) lie on the Extracellular side of the membrane. A helical membrane pass occupies residues 331–350 (VYAVVRGLFLLKLSLSLLML). At 351–358 (LAGPDHPG) the chain is on the cytoplasmic side. A helical membrane pass occupies residues 359 to 393 (LLCFFIASNRVFTEGTCKLLTLVVTDLVDEDLVLN). At 394-402 (HRKQAASAL) the chain is on the extracellular side. Residues 403-429 (LFGMVALVTKPGQTFAPLLGTWLLCFY) form a helical membrane-spanning segment. Topologically, residues 430–468 (TGHDLFQQSPMTPVGSVRPWPELPAPAPAPAQAPTLRQG) are cytoplasmic. A helical membrane pass occupies residues 469–487 (CFYLLVFVPITCALLQLFT). The Extracellular portion of the chain corresponds to 488–519 (WSQFTLHGRRLRTVKAQRQNLAQIHTLNIKMV).

The protein localises to the cell membrane. The sequence is that of Transmembrane protein 180 from Mus musculus (Mouse).